A 525-amino-acid polypeptide reads, in one-letter code: GMP synthase [glutamine-hydrolyzing] (525 aa).

Residues 9–207 (RILILDFGSQ…VRDICQCEAL (199 aa)) form the Glutamine amidotransferase type-1 domain. The Nucleophile role is filled by cysteine 86. Residues histidine 181 and glutamate 183 contribute to the active site. The GMPS ATP-PPase domain occupies 208 to 400 (WTPAKIIDDA…LGLPYDMLYR (193 aa)). 235-241 (SGGVDSS) contacts ATP.

Homodimer.

The enzyme catalyses XMP + L-glutamine + ATP + H2O = GMP + L-glutamate + AMP + diphosphate + 2 H(+). Its pathway is purine metabolism; GMP biosynthesis; GMP from XMP (L-Gln route): step 1/1. Functionally, catalyzes the synthesis of GMP from XMP. This is GMP synthase [glutamine-hydrolyzing] from Klebsiella pneumoniae subsp. pneumoniae (strain ATCC 700721 / MGH 78578).